The following is a 709-amino-acid chain: Elongation factor G (709 aa).

Residues 10 to 295 enclose the tr-type G domain; the sequence is NQVRNIGIMA…AVVDYLPSPE (286 aa). GTP is bound by residues 19 to 26, 91 to 95, and 145 to 148; these read AHIDAGKT, DTPGH, and NKMD.

The protein belongs to the TRAFAC class translation factor GTPase superfamily. Classic translation factor GTPase family. EF-G/EF-2 subfamily.

The protein localises to the cytoplasm. Its function is as follows. Catalyzes the GTP-dependent ribosomal translocation step during translation elongation. During this step, the ribosome changes from the pre-translocational (PRE) to the post-translocational (POST) state as the newly formed A-site-bound peptidyl-tRNA and P-site-bound deacylated tRNA move to the P and E sites, respectively. Catalyzes the coordinated movement of the two tRNA molecules, the mRNA and conformational changes in the ribosome. This chain is Elongation factor G, found in Bifidobacterium animalis subsp. lactis (strain AD011).